The chain runs to 395 residues: Scyllo-inosose 3-dehydrogenase (395 aa).

A Zn(2+)-binding site is contributed by Cys-66. Catalysis depends on charge relay system residues Ser-68 and His-71. Zn(2+)-binding residues include His-95, Glu-96, Cys-131, Cys-134, Cys-137, Cys-145, and Glu-193. Residues Ile-223, Glu-243, and Arg-248 each contribute to the NAD(+) site.

It belongs to the zinc-containing alcohol dehydrogenase family. In terms of assembly, homodimer. It depends on Zn(2+) as a cofactor.

The enzyme catalyses scyllo-inosose + NAD(+) = 3-dehydro-scyllo-inosose + NADH + H(+). It functions in the pathway polyol metabolism; myo-inositol metabolism. Its function is as follows. Catalyzes the NAD(+)-dependent oxidation of scyllo-inosose (2-keto-myo-inositol) to 3-dehydro-scyllo-inosose (diketo-inositol), and thus probably functions in a myo-inositol degradation pathway together with IolG, IolN and IolO. Has no activity on myo-inositol, D-chiro-inositol and 1-keto-D-chiro-inositol. The polypeptide is Scyllo-inosose 3-dehydrogenase (Thermotoga maritima (strain ATCC 43589 / DSM 3109 / JCM 10099 / NBRC 100826 / MSB8)).